The sequence spans 156 residues: UPF0266 membrane protein YobD (156 aa).

Residues 1–5 (MTITD) lie on the Periplasmic side of the membrane. The chain crosses the membrane as a helical span at residues 6 to 26 (LVLILFIAALLAYALYDQFIM). Residues 27-44 (PRRNGPTLLSIALLRRGR) are Cytoplasmic-facing. The helical transmembrane segment at 45-65 (VDSVIFVGLVAILIYNNVTSH) threads the bilayer. Glycine 66 is a topological domain (periplasmic). The chain crosses the membrane as a helical span at residues 67–87 (AQMTTWLLSALALMGFYIFWI). At 88 to 156 (RTPRIIFKQR…LLIENQYLKI (69 aa)) the chain is on the cytoplasmic side.

The protein belongs to the UPF0266 family.

The protein resides in the cell inner membrane. The sequence is that of UPF0266 membrane protein YobD (yobD) from Salmonella typhimurium (strain LT2 / SGSC1412 / ATCC 700720).